The chain runs to 507 residues: Maturase K (507 aa).

The protein belongs to the intron maturase 2 family. MatK subfamily.

The protein resides in the plastid. Its subcellular location is the chloroplast. Its function is as follows. Usually encoded in the trnK tRNA gene intron. Probably assists in splicing its own and other chloroplast group II introns. This Cananga odorata (Ylang-ylang tree) protein is Maturase K.